Here is a 797-residue protein sequence, read N- to C-terminus: G-type lectin S-receptor-like serine/threonine-protein kinase SD2-2 (797 aa).

The signal sequence occupies residues 1–23; it reads MPCTTYLPLLLLLFLLPPPSVQS. The region spanning 24 to 139 is the Bulb-type lectin domain; sequence KVIIKGNQTI…DGSPVWQSFD (116 aa). The Extracellular portion of the chain corresponds to 24 to 401; the sequence is KVIIKGNQTI…KNSKGNISKS (378 aa). 4 N-linked (GlcNAc...) asparagine glycosylation sites follow: Asn30, Asn49, Asn150, and Asn197. The 37-residue stretch at 274 to 310 folds into the EGF-like; atypical domain; the sequence is PEDPCRVYNLCGQLGFCSSELLKPCACIRGFRPRNDA. 4 disulfides stabilise this stretch: Cys278–Cys290, Cys284–Cys298, Cys359–Cys381, and Cys363–Cys369. The 87-residue stretch at 321–407 folds into the PAN domain; sequence CRRENGDSGE…ISKSIIILCS (87 aa). N-linked (GlcNAc...) asparagine glycosylation is found at Asn366 and Asn397. Residues 402–422 traverse the membrane as a helical segment; it reads IIILCSVVGSISVLGFTLLVP. At 423–797 the chain is on the cytoplasmic side; sequence LILLKRSRKR…SRSSFGRPSP (375 aa). Residues 461–742 enclose the Protein kinase domain; it reads NGFSDKVGHG…TVVKMLEGVV (282 aa). Residues 467–475 and Lys490 contribute to the ATP site; that span reads VGHGGFGAV. A caM-binding region spans residues 550–566; it reads SPKLLSWETRFRIALGT. Residue Asp585 is the Proton acceptor of the active site. The interval 767 to 797 is disordered; the sequence is GTSCSEGHGCSDLNTGLSSPGSRSSFGRPSP. Positions 784–797 are enriched in low complexity; sequence SSPGSRSSFGRPSP.

The protein belongs to the protein kinase superfamily. Ser/Thr protein kinase family. Autophosphorylated. As to expression, expressed in the shoot apex and roots, specifically in lateral roots and at the root-hypocotyl transition zone.

Its subcellular location is the cell membrane. The catalysed reaction is L-seryl-[protein] + ATP = O-phospho-L-seryl-[protein] + ADP + H(+). The enzyme catalyses L-threonyl-[protein] + ATP = O-phospho-L-threonyl-[protein] + ADP + H(+). Functionally, serine/threonine-protein kinase. This is G-type lectin S-receptor-like serine/threonine-protein kinase SD2-2 (SD22) from Arabidopsis thaliana (Mouse-ear cress).